A 187-amino-acid chain; its full sequence is Ribosome-recycling factor (187 aa).

The protein belongs to the RRF family.

The protein localises to the cytoplasm. Its function is as follows. Responsible for the release of ribosomes from messenger RNA at the termination of protein biosynthesis. May increase the efficiency of translation by recycling ribosomes from one round of translation to another. The sequence is that of Ribosome-recycling factor from Bradyrhizobium sp. (strain ORS 278).